The following is a 496-amino-acid chain: MDQDYERRLLRQIVIQNENTMPRVTEMRRTLTPASSPVSSPSKHGDRFIPSRAGANWSVNFHRINENEKSPSQNRKAKDATSDNGKDGLAYSALLKNELLGAGIEKVQDPQTEDRRLQPSTPEKKGLFTYSLSTKRSSPDDGNDVSPYSLSPVSNKSQKLLRSPRKPTRKISKIPFKVLDAPELQDDFYLNLVDWSSLNVLSVGLGTCVYLWSACTSQVTRLCDLSVEGDSVTSVGWSERGNLVAVGTHKGFVQIWDAAAGKKLSMLEGHTARVGALAWNAEQLSSGSRDRMILQRDIRTPPLQSERRLQGHRQEVCGLKWSTDHQLLASGGNDNKLLVWNHSSLSPVQQYTEHLAAVKAIAWSPHQHGLLASGGGTADRCIRFWNTLTGQPLQCIDTGSQVCNLAWSKHANELVSTHGYSQNQILVWKYPSLTQVAKLTGHSYRVLYLAMSPDGEAIVTGAGDETLRFWNVFSKTRSTKVKWESVSVLNLFTRIR.

3 disordered regions span residues 28-51 (RRTL…FIPS), 64-88 (INEN…GKDG), and 105-166 (EKVQ…SPRK). Thr-32 carries the phosphothreonine modification. Polar residues predominate over residues 32–42 (TPASSPVSSPS). The residue at position 36 (Ser-36) is a Phosphoserine. The tract at residues 47–52 (RFIPSR) is involved in APC/FZR1 E3 ubiquitin-protein ligase complex activity. Lys-69 bears the N6-acetyllysine mark. 2 stretches are compositionally biased toward basic and acidic residues: residues 76 to 86 (KAKDATSDNGK) and 106 to 126 (KVQD…EKKG). Residues Ser-133, Ser-138, Ser-146, and Ser-151 each carry the phosphoserine modification. The span at 146 to 160 (SPYSLSPVSNKSQKL) shows a compositional bias: polar residues. An N6-acetyllysine modification is found at Lys-159. 7 WD repeats span residues 182–222 (PELQ…VTRL), 227–266 (VEGD…KLSM), 269–306 (GHTA…LQSE), 311–350 (GHRQ…PVQQ), 353–395 (EHLA…PLQC), 397–438 (DTGS…QVAK), and 441–480 (GHSY…RSTK).

It belongs to the WD repeat CDC20/Fizzy family. In terms of assembly, the unphosphorylated form interacts with APC/C during mitosis. Interacts with NINL. Interacts (in complex with the anaphase promoting complex APC) with MAD2L2; inhibits FZR1-mediated APC/C activation. Interacts with SIRT2 and USP37. Interacts (via WD repeats) with MAK. Interacts with RBBP8/CtIP; this interaction leads to RBBP8 proteasomal degradation. Interacts with HECW2. Interacts with SASS6; the interaction is regulated by CENATAC and leads to SASS6 proteasomal degradation. Interacts (via N-terminus) with CCNF. Interacts with CDC6. Interacts with TK1 (via the KEN box). Acetylated. Deacetylated by SIRT2 at Lys-69 and Lys-159; deacetylation enhances the interaction of FZR1 with CDC27, leading to activation of anaphase promoting complex/cyclosome (APC/C). In terms of processing, following DNA damage, it is dephosphorylated by CDC14B in G2 phase, leading to its reassociation with the APC/C, and allowing an efficient G2 DNA damage checkpoint. Phosphorylated by MAK. Post-translationally, ubiquitinated by the SCF(CCNF) E3 ubiquitin-protein ligase complex; leading to its degradation by the proteasome. As to expression, isoform 2 is expressed at high levels in heart, liver, spleen and some cancer cell lines whereas isoform 3 is expressed only at low levels in these tissues.

The protein resides in the nucleus. The protein localises to the cytoplasm. Its pathway is protein modification; protein ubiquitination. In terms of biological role, substrate-specific adapter for the anaphase promoting complex/cyclosome (APC/C) E3 ubiquitin-protein ligase complex. Associates with the APC/C in late mitosis, in replacement of CDC20, and activates the APC/C during anaphase and telophase. The APC/C remains active in degrading substrates to ensure that positive regulators of the cell cycle do not accumulate prematurely. At the G1/S transition FZR1 is phosphorylated, leading to its dissociation from the APC/C. Following DNA damage, it is required for the G2 DNA damage checkpoint: its dephosphorylation and reassociation with the APC/C leads to the ubiquitination of PLK1, preventing entry into mitosis. Acts as an adapter for APC/C to target the DNA-end resection factor RBBP8/CtIP for ubiquitination and subsequent proteasomal degradation. Through the regulation of RBBP8/CtIP protein turnover, may play a role in DNA damage response, favoring DNA double-strand repair through error-prone non-homologous end joining (NHEJ) over error-free, RBBP8-mediated homologous recombination (HR). The polypeptide is Fizzy-related protein homolog (Homo sapiens (Human)).